The chain runs to 1397 residues: Ankyrin repeat domain-containing protein 30A (1397 aa).

ANK repeat units lie at residues 72 to 101 (QKRT…QLDV), 105 to 134 (EHRT…DINL), 138 to 167 (YGNT…VIEV), 171 to 200 (ASLT…NANA), 204 to 233 (YKCT…DVFA), and 237 to 271 (CGVT…HQNT). Over residues 267–279 (NHQNTNPEGTSAG) the composition is skewed to polar residues. Disordered regions lie at residues 267–376 (NHQN…TWPA), 453–482 (PTKE…EYSC), 782–807 (QTLR…WDSE), and 902–931 (TLRA…LRET). Basic and acidic residues-rich tracts occupy residues 290-304 (RTPD…KTPD) and 312-326 (RTPD…KTPD). The span at 455-467 (KESSTKASANDQR) shows a compositional bias: polar residues. 2 stretches are compositionally biased toward basic and acidic residues: residues 782–800 (QTLR…KDYE) and 913–931 (SKQK…LRET). Coiled coils occupy residues 998–1188 (VLKK…KQDK) and 1282–1327 (EHAQ…FQLQ).

Mainly expressed in breast and testis. A very faint signal is detected in placenta. Also expressed in many breast cancer cells.

The sequence is that of Ankyrin repeat domain-containing protein 30A (ANKRD30A) from Homo sapiens (Human).